The sequence spans 365 residues: 2-aminoethylphosphonate--pyruvate transaminase (365 aa).

Lysine 194 is subject to N6-(pyridoxal phosphate)lysine.

It belongs to the class-V pyridoxal-phosphate-dependent aminotransferase family. PhnW subfamily. In terms of assembly, homodimer. Pyridoxal 5'-phosphate is required as a cofactor.

It catalyses the reaction (2-aminoethyl)phosphonate + pyruvate = phosphonoacetaldehyde + L-alanine. Involved in phosphonate degradation. This chain is 2-aminoethylphosphonate--pyruvate transaminase, found in Bacillus cereus (strain AH187).